The primary structure comprises 1131 residues: Phytochrome A (1131 aa).

A disordered region spans residues 1–23 (MSSSRPAHSSSSSSRTRQSSRAR). In terms of domain architecture, GAF spans 219 to 404 (SMEALCNTVV…VFAVHVNKEF (186 aa)). Cys324 is a binding site for phytochromobilin. 2 PAS domains span residues 620–690 (VTSE…LQGR) and 750–834 (VEGD…LAGE). Residues 904 to 1124 (YMRHAINKPL…TFILTAELAA (221 aa)) form the Histidine kinase domain.

Belongs to the phytochrome family. Homodimer. In terms of processing, contains one covalently linked phytochromobilin chromophore.

Regulatory photoreceptor which exists in two forms that are reversibly interconvertible by light: the Pr form that absorbs maximally in the red region of the spectrum and the Pfr form that absorbs maximally in the far-red region. Photoconversion of Pr to Pfr induces an array of morphogenic responses, whereas reconversion of Pfr to Pr cancels the induction of those responses. Pfr controls the expression of a number of nuclear genes including those encoding the small subunit of ribulose-bisphosphate carboxylase, chlorophyll A/B binding protein, protochlorophyllide reductase, rRNA, etc. It also controls the expression of its own gene(s) in a negative feedback fashion. This chain is Phytochrome A (PHYA1), found in Zea mays (Maize).